Consider the following 131-residue polypeptide: Large ribosomal subunit protein eL32 (131 aa).

It belongs to the eukaryotic ribosomal protein eL32 family. Component of the large ribosomal subunit. Mature ribosomes consist of a small (40S) and a large (60S) subunit. The 40S subunit contains about 32 different proteins and 1 molecule of RNA (18S). The 60S subunit contains 45 different proteins and 3 molecules of RNA (25S, 5.8S and 5S).

The protein localises to the cytoplasm. Component of the ribosome, a large ribonucleoprotein complex responsible for the synthesis of proteins in the cell. The small ribosomal subunit (SSU) binds messenger RNAs (mRNAs) and translates the encoded message by selecting cognate aminoacyl-transfer RNA (tRNA) molecules. The large subunit (LSU) contains the ribosomal catalytic site termed the peptidyl transferase center (PTC), which catalyzes the formation of peptide bonds, thereby polymerizing the amino acids delivered by tRNAs into a polypeptide chain. The nascent polypeptides leave the ribosome through a tunnel in the LSU and interact with protein factors that function in enzymatic processing, targeting, and the membrane insertion of nascent chains at the exit of the ribosomal tunnel. The chain is Large ribosomal subunit protein eL32 from Candida albicans (strain SC5314 / ATCC MYA-2876) (Yeast).